Here is a 222-residue protein sequence, read N- to C-terminus: Putative metal transport protein MJ1569 (222 aa).

The next 6 membrane-spanning stretches (helical) occupy residues Ile3–Ile23, Leu39–Val59, Trp81–Gly101, Gly102–Tyr122, Val135–Phe155, and Ala180–Trp200.

This sequence belongs to the CbiM family.

The protein resides in the cell membrane. Functionally, may be involved in metal transport. This is Putative metal transport protein MJ1569 from Methanocaldococcus jannaschii (strain ATCC 43067 / DSM 2661 / JAL-1 / JCM 10045 / NBRC 100440) (Methanococcus jannaschii).